The chain runs to 128 residues: Large ribosomal subunit protein uL22 (128 aa).

It belongs to the universal ribosomal protein uL22 family. As to quaternary structure, part of the 50S ribosomal subunit.

In terms of biological role, this protein binds specifically to 23S rRNA; its binding is stimulated by other ribosomal proteins, e.g. L4, L17, and L20. It is important during the early stages of 50S assembly. It makes multiple contacts with different domains of the 23S rRNA in the assembled 50S subunit and ribosome. The globular domain of the protein is located near the polypeptide exit tunnel on the outside of the subunit, while an extended beta-hairpin is found that lines the wall of the exit tunnel in the center of the 70S ribosome. The polypeptide is Large ribosomal subunit protein uL22 (Nitrobacter hamburgensis (strain DSM 10229 / NCIMB 13809 / X14)).